A 307-amino-acid chain; its full sequence is 4-hydroxy-tetrahydrodipicolinate synthase (307 aa).

Position 57 (S57) interacts with pyruvate. Residue Y145 is the Proton donor/acceptor of the active site. Catalysis depends on K173, which acts as the Schiff-base intermediate with substrate. Residue I219 coordinates pyruvate.

The protein belongs to the DapA family. In terms of assembly, homotetramer; dimer of dimers.

The protein localises to the cytoplasm. The catalysed reaction is L-aspartate 4-semialdehyde + pyruvate = (2S,4S)-4-hydroxy-2,3,4,5-tetrahydrodipicolinate + H2O + H(+). The protein operates within amino-acid biosynthesis; L-lysine biosynthesis via DAP pathway; (S)-tetrahydrodipicolinate from L-aspartate: step 3/4. In terms of biological role, catalyzes the condensation of (S)-aspartate-beta-semialdehyde [(S)-ASA] and pyruvate to 4-hydroxy-tetrahydrodipicolinate (HTPA). This Polynucleobacter asymbioticus (strain DSM 18221 / CIP 109841 / QLW-P1DMWA-1) (Polynucleobacter necessarius subsp. asymbioticus) protein is 4-hydroxy-tetrahydrodipicolinate synthase.